The sequence spans 73 residues: Translation initiation factor IF-1 (73 aa).

The region spanning 1–73 (MAKKDGAIEI…TRGRIVYRYK (73 aa)) is the S1-like domain.

It belongs to the IF-1 family. Component of the 30S ribosomal translation pre-initiation complex which assembles on the 30S ribosome in the order IF-2 and IF-3, IF-1 and N-formylmethionyl-tRNA(fMet); mRNA recruitment can occur at any time during PIC assembly.

Its subcellular location is the cytoplasm. Its function is as follows. One of the essential components for the initiation of protein synthesis. Stabilizes the binding of IF-2 and IF-3 on the 30S subunit to which N-formylmethionyl-tRNA(fMet) subsequently binds. Helps modulate mRNA selection, yielding the 30S pre-initiation complex (PIC). Upon addition of the 50S ribosomal subunit IF-1, IF-2 and IF-3 are released leaving the mature 70S translation initiation complex. This is Translation initiation factor IF-1 from Thermobifida fusca (strain YX).